The sequence spans 387 residues: Cysteine desulfurase (387 aa).

Residues 72-73 (GT), asparagine 152, glutamine 180, and 200-202 (SAH) each bind pyridoxal 5'-phosphate. Lysine 203 is subject to N6-(pyridoxal phosphate)lysine. Threonine 238 lines the pyridoxal 5'-phosphate pocket. The active-site Cysteine persulfide intermediate is the cysteine 323. Position 323 (cysteine 323) interacts with [2Fe-2S] cluster.

This sequence belongs to the class-V pyridoxal-phosphate-dependent aminotransferase family. NifS/IscS subfamily. Homodimer. Requires pyridoxal 5'-phosphate as cofactor.

The enzyme catalyses (sulfur carrier)-H + L-cysteine = (sulfur carrier)-SH + L-alanine. Its function is as follows. Catalyzes the removal of elemental sulfur atoms from cysteine to produce alanine. Seems to participate in the biosynthesis of the nitrogenase metalloclusters by providing the inorganic sulfur required for the Fe-S core formation. In Cereibacter sphaeroides (Rhodobacter sphaeroides), this protein is Cysteine desulfurase.